Consider the following 381-residue polypeptide: UDP-4-amino-4-deoxy-L-arabinose--oxoglutarate aminotransferase (381 aa).

Lys182 carries the N6-(pyridoxal phosphate)lysine modification.

Belongs to the DegT/DnrJ/EryC1 family. ArnB subfamily. In terms of assembly, homodimer. Pyridoxal 5'-phosphate is required as a cofactor.

It carries out the reaction UDP-4-amino-4-deoxy-beta-L-arabinose + 2-oxoglutarate = UDP-beta-L-threo-pentopyranos-4-ulose + L-glutamate. It participates in nucleotide-sugar biosynthesis; UDP-4-deoxy-4-formamido-beta-L-arabinose biosynthesis; UDP-4-deoxy-4-formamido-beta-L-arabinose from UDP-alpha-D-glucuronate: step 2/3. Its pathway is bacterial outer membrane biogenesis; lipopolysaccharide biosynthesis. Its function is as follows. Catalyzes the conversion of UDP-4-keto-arabinose (UDP-Ara4O) to UDP-4-amino-4-deoxy-L-arabinose (UDP-L-Ara4N). The modified arabinose is attached to lipid A and is required for resistance to polymyxin and cationic antimicrobial peptides. This is UDP-4-amino-4-deoxy-L-arabinose--oxoglutarate aminotransferase from Proteus mirabilis (strain HI4320).